Reading from the N-terminus, the 419-residue chain is L-rhamnose isomerase (419 aa).

The Mn(2+) site is built by His262, Asp294, and Asp296.

It belongs to the rhamnose isomerase family. Homotetramer. Mn(2+) serves as cofactor.

The protein localises to the cytoplasm. It catalyses the reaction L-rhamnopyranose = L-rhamnulose. It participates in carbohydrate degradation; L-rhamnose degradation; glycerone phosphate from L-rhamnose: step 1/3. In terms of biological role, catalyzes the interconversion of L-rhamnose and L-rhamnulose. In Escherichia coli (strain SMS-3-5 / SECEC), this protein is L-rhamnose isomerase.